A 354-amino-acid chain; its full sequence is GTPase Obg (354 aa).

The Obg domain occupies methionine 1–leucine 159. The region spanning alanine 160–phenylalanine 333 is the OBG-type G domain. Residues glycine 166–serine 173, phenylalanine 191–threonine 195, aspartate 212–glycine 215, threonine 283–aspartate 286, and serine 314–valine 316 contribute to the GTP site. Mg(2+) contacts are provided by serine 173 and threonine 193.

The protein belongs to the TRAFAC class OBG-HflX-like GTPase superfamily. OBG GTPase family. In terms of assembly, monomer. It depends on Mg(2+) as a cofactor.

It localises to the cytoplasm. Its function is as follows. An essential GTPase which binds GTP, GDP and possibly (p)ppGpp with moderate affinity, with high nucleotide exchange rates and a fairly low GTP hydrolysis rate. Plays a role in control of the cell cycle, stress response, ribosome biogenesis and in those bacteria that undergo differentiation, in morphogenesis control. In Anaeromyxobacter sp. (strain K), this protein is GTPase Obg.